The sequence spans 1070 residues: Error-prone DNA polymerase (1070 aa).

This sequence belongs to the DNA polymerase type-C family. DnaE2 subfamily.

Its subcellular location is the cytoplasm. It catalyses the reaction DNA(n) + a 2'-deoxyribonucleoside 5'-triphosphate = DNA(n+1) + diphosphate. Functionally, DNA polymerase involved in damage-induced mutagenesis and translesion synthesis (TLS). It is not the major replicative DNA polymerase. The polypeptide is Error-prone DNA polymerase (Aromatoleum aromaticum (strain DSM 19018 / LMG 30748 / EbN1) (Azoarcus sp. (strain EbN1))).